The sequence spans 713 residues: Glutamine-dependent NAD(+) synthetase (713 aa).

A CN hydrolase domain is found at 4–275 (VTLATCNLNQ…IEVITATVDL (272 aa)). The active-site Proton acceptor; for glutaminase activity is the glutamate 44. Lysine 114 functions as the For glutaminase activity in the catalytic mechanism. Residue cysteine 175 is the Nucleophile; for glutaminase activity of the active site. Positions 324–703 (YNTPAEEIGF…QRPQLKNTVN (380 aa)) are ligase. ATP is bound at residue 354 to 361 (PLSGGADS). Serine 356 is a catalytic residue.

It in the C-terminal section; belongs to the NAD synthetase family.

The catalysed reaction is deamido-NAD(+) + L-glutamine + ATP + H2O = L-glutamate + AMP + diphosphate + NAD(+) + H(+). Its pathway is cofactor biosynthesis; NAD(+) biosynthesis; NAD(+) from deamido-NAD(+) (L-Gln route): step 1/1. This chain is Glutamine-dependent NAD(+) synthetase (nadsyn1), found in Dictyostelium discoideum (Social amoeba).